Here is a 516-residue protein sequence, read N- to C-terminus: Exoglucanase 1 (516 aa).

A signal peptide spans 1–17 (MRASLLAFSLAAAVAGG). A catalytic region spans residues 18-445 (QQAGTLTAKR…GHLGISPFSG (428 aa)). Residue asparagine 45 is glycosylated (N-linked (GlcNAc...) asparagine). The Nucleophile role is filled by glutamate 223. Glutamate 228 functions as the Proton donor in the catalytic mechanism. Residue asparagine 281 is glycosylated (N-linked (GlcNAc...) asparagine). The segment at 444 to 481 (SGGSSGTPPSNPSSSASPTSSTAKPSSTSTASNPSGTG) is disordered. The tract at residues 446–480 (GSSGTPPSNPSSSASPTSSTAKPSSTSTASNPSGT) is linker. Positions 449–481 (GTPPSNPSSSASPTSSTAKPSSTSTASNPSGTG) are enriched in low complexity. One can recognise a CBM1 domain in the interval 480–516 (TGAAHWAQCGGIGFSGPTTCPEPYTCAKDHDIYSQCV). 2 disulfides stabilise this stretch: cysteine 488-cysteine 505 and cysteine 499-cysteine 515.

This sequence belongs to the glycosyl hydrolase 7 (cellulase C) family.

It localises to the secreted. The enzyme catalyses Hydrolysis of (1-&gt;4)-beta-D-glucosidic linkages in cellulose and cellotetraose, releasing cellobiose from the non-reducing ends of the chains.. The protein is Exoglucanase 1 (cbh-1) of Neurospora crassa (strain ATCC 24698 / 74-OR23-1A / CBS 708.71 / DSM 1257 / FGSC 987).